A 37-amino-acid polypeptide reads, in one-letter code: Esculentin-2P (37 aa).

C31 and C37 are disulfide-bonded.

As to expression, expressed by the skin glands.

It is found in the secreted. Functionally, antibacterial activity against Gram-negative bacterium E.coli. The protein is Esculentin-2P of Lithobates pipiens (Northern leopard frog).